Consider the following 1060-residue polypeptide: DNA topoisomerase 1 (1060 aa).

The 141-residue stretch at 1 to 141 folds into the Toprim domain; sequence MILVIAEKPN…KRMKFSALTK (141 aa). Residues Glu-7 and Asp-107 each coordinate Mg(2+). One can recognise a Topo IA-type catalytic domain in the interval 156–947; sequence NFGMANAGIA…EAKIRLTKIL (792 aa). Residues 196–201 are interaction with DNA; the sequence is STGRVQ. Residues 482–591 form the DOD-type homing endonuclease domain; it reads LIGYLAGKGG…IKVYLQLLGI (110 aa). Tyr-690 serves as the catalytic O-(5'-phospho-DNA)-tyrosine intermediate. The segment at 978 to 1006 adopts a C4-type 1 zinc-finger fold; that stretch reads CPKCGGDLIVKYNEKTGKRFVGCSNWPKC. The C4-type 2; atypical zinc finger occupies 1025 to 1050; the sequence is CCNGAPVVIIREKDGREWEICLDMNC.

This sequence belongs to the type IA topoisomerase family. In terms of assembly, monomer. The cofactor is Mg(2+). In terms of processing, this protein undergoes a protein self splicing that involves a post-translational excision of the intervening region (intein) followed by peptide ligation.

It carries out the reaction ATP-independent breakage of single-stranded DNA, followed by passage and rejoining.. In terms of biological role, releases the supercoiling and torsional tension of DNA, which is introduced during the DNA replication and transcription, by transiently cleaving and rejoining one strand of the DNA duplex. Introduces a single-strand break via transesterification at a target site in duplex DNA. The scissile phosphodiester is attacked by the catalytic tyrosine of the enzyme, resulting in the formation of a DNA-(5'-phosphotyrosyl)-enzyme intermediate and the expulsion of a 3'-OH DNA strand. The free DNA strand then undergoes passage around the unbroken strand, thus removing DNA supercoils. Finally, in the religation step, the DNA 3'-OH attacks the covalent intermediate to expel the active-site tyrosine and restore the DNA phosphodiester backbone. The chain is DNA topoisomerase 1 (topA) from Pyrococcus furiosus (strain ATCC 43587 / DSM 3638 / JCM 8422 / Vc1).